The chain runs to 140 residues: Putative nickel-responsive regulator 3 (140 aa).

Residues His-81, His-92, His-94, and Cys-100 each coordinate Ni(2+).

The protein belongs to the transcriptional regulatory CopG/NikR family. Ni(2+) is required as a cofactor.

Functionally, transcriptional regulator. The chain is Putative nickel-responsive regulator 3 from Methanosarcina acetivorans (strain ATCC 35395 / DSM 2834 / JCM 12185 / C2A).